We begin with the raw amino-acid sequence, 178 residues long: Large ribosomal subunit protein uL5 (178 aa).

The protein belongs to the universal ribosomal protein uL5 family. As to quaternary structure, part of the 50S ribosomal subunit; part of the 5S rRNA/L5/L18/L25 subcomplex. Contacts the 5S rRNA and the P site tRNA. Forms a bridge to the 30S subunit in the 70S ribosome.

This is one of the proteins that bind and probably mediate the attachment of the 5S RNA into the large ribosomal subunit, where it forms part of the central protuberance. In the 70S ribosome it contacts protein S13 of the 30S subunit (bridge B1b), connecting the 2 subunits; this bridge is implicated in subunit movement. Contacts the P site tRNA; the 5S rRNA and some of its associated proteins might help stabilize positioning of ribosome-bound tRNAs. This Psychrobacter sp. (strain PRwf-1) protein is Large ribosomal subunit protein uL5.